The sequence spans 658 residues: MRSRALLFLLFVLLPMLPAPPAGQPSGRRRGQAGCGGGFWGDRVDSQPFALPYIHPTNPFASDIPAAAGTGARPRQPIRPLGSAWRDQSQRPAASTRRRPAPAGASPLTAVAPAPDTAPVPDADSRGAILRRQYNLSTSPLTSTIATGTNFVLYAAPLSPLLPLQDGTNTHIMATEASNYAQYRVVRATIRYRPLVPNAVGGYAISISFWPQTTTTPTSVDMNSITSTDVRILVQPGIASELVTPSERLHYRNQGWRSVETSGVAEEEATSGLVMLCIHGSPVNSYTNTPYTGALGLLDFALELEFRNLTPGNTNTRVSRYSSSARHKLRRGPDGTAELTTTAATRFMKDLHFTGTNGVGEVGRGIALTLFNLADTLLGGLPTELISSAGGQLFYSRPVVSANGELTVKLYTSVENAQQDKGVAIPHDIDLGESRVVIQDYDNQHEQDRPTPSPAPSRPFSVLRANDVLWLSLTAAEYDQTTYGSSTNPMYVSDTVTFVNVATGAQGVSRSLDWSKVTLDGRPLTTIQQYSKTFYVLPLRGKLSFWEAGTTKAGYPYNYNTTASDQILIENAAGHRVCISTYTTNLGSGPVSVSAVGVLAPHSALAALEDTADYPARAHTFDDFCPECRALGLQGCAFQSTVGELQRLKMKVGKTREY.

Positions 1–19 are cleaved as a signal peptide; sequence MRSRALLFLLFVLLPMLPA. Residues 62–124 are disordered; that stretch reads SDIPAAAGTG…PDTAPVPDAD (63 aa). Residues 91 to 122 are compositionally biased toward low complexity; that stretch reads RPAASTRRRPAPAGASPLTAVAPAPDTAPVPD. 2 N-linked (GlcNAc...) asparagine; by host glycosylation sites follow: asparagine 135 and asparagine 308. Positions 366–392 are particle formation; sequence IALTLFNLADTLLGGLPTELISSAGGQ. Residue asparagine 560 is glycosylated (N-linked (GlcNAc...) asparagine; by host). The oligomerization stretch occupies residues 583–608; it reads TTNLGSGPVSVSAVGVLAPHSALAAL.

It belongs to the hepevirus capsid protein family. In terms of assembly, homodimer. Self-assembles to form the capsid. The capsid is dominated by dimers that define the 30 morphological units. Interacts with phosphorylated protein ORF3. Interacts with host TMEM134. Interacts with host ASGR1 and ASGR2; these interactions facilitate infection of host hepatocytes. Cleaved by host protease in the N-terminus. Post-translationally, N-glycosylated. In terms of processing, not N-glycosylated. The C-terminus of the capsid protein ORF2 is truncated in non-enveloped virions shedded in feces, probably due to host proteases.

Its subcellular location is the secreted. It localises to the virion. It is found in the host cytoplasm. The protein resides in the host endoplasmic reticulum. The protein localises to the host Golgi apparatus. Its subcellular location is the host cell surface. It localises to the host nucleus. In terms of biological role, plays a role in the inhibition of host antibody-mediated neutralization without blocking viral cell entry. Functionally, forms an icosahedral capsid with a T=1 symmetry and a 34 nm diameter. The capsid is composed of 60 copies linked to each other. Binds to the 5' end of the genomic RNA to mediate genome encapsidation. Binds to heparin surface proteoglycans (HSPGs) to mediate viral entry. Additionally, the interactions with host ASGR1 and ASGR2 facilitate viral infection of hepatocytes. Inhibits IFN production by blocking host TBK1-induced IRF3 phosphorylation. The nuclear form probably modulates host gene expression. This chain is Pro-secreted protein ORF2, found in Bandicota bengalensis (lesser bandicoot rat).